The chain runs to 84 residues: Large ribosomal subunit protein uL29 (84 aa).

It belongs to the universal ribosomal protein uL29 family.

The chain is Large ribosomal subunit protein uL29 from Mycoplasma mobile (strain ATCC 43663 / 163K / NCTC 11711) (Mesomycoplasma mobile).